Consider the following 453-residue polypeptide: Plasmepsin II (453 aa).

Residues 1 to 37 (MDITVREHDFKHGFIKSNSTFDGLNIDNSKNKKKIQK) are Cytoplasmic-facing. A propeptide spanning residues 1 to 124 (MDITVREHDF…SGLTKTNYLG (124 aa)) is cleaved from the precursor. The chain crosses the membrane as a helical; Signal-anchor for type II membrane protein span at residues 38 to 58 (GFQILYVLLFCSVMCGLFYYV). The Lumenal portion of the chain corresponds to 59–453 (YENVWLQRDN…VGIALAKKNL (395 aa)). A Peptidase A1 domain is found at 140–447 (FYGDAEVGDN…DYDNQSVGIA (308 aa)). Asp158 is an active-site residue. Cys171 and Cys176 are oxidised to a cystine. Asp338 is an active-site residue. Cys373 and Cys409 are disulfide-bonded.

Belongs to the peptidase A1 family. As to quaternary structure, component of the hemozoin formation complex (HFC) composed of falcipains FP2A and/or FP2B, plasmepsins PMII, PMIII/HAP and PMIV, heme detoxifying protein HDP and falcilysin FLN. The HFC complex is involved in hemoglobin degradation and detoxification of heme in the food vacuole during the asexual blood stage. Not N-glycosylated. In terms of processing, proteolytically cleaved into the soluble active mature form in the digestive vacuole by cysteine protease falcipains; the process begins at the early ring stage. Proteolysis requires an acidic environment. In absence of falcipains, autoprocessing may serve as an alternate activation system.

It is found in the membrane. It localises to the vacuole lumen. The protein localises to the vacuole membrane. The catalysed reaction is Hydrolysis of the bonds linking certain hydrophobic residues in hemoglobin or globin. Also cleaves small molecules substrates such as Ala-Leu-Glu-Arg-Thr-Phe-|-Phe(NO2)-Ser-Phe-Pro-Thr.. Its activity is regulated as follows. Inhibited by pepstatin A. Inhibited by KNI derived compounds (KNI-10742, 10743, 10395, 10333, and 10343). In terms of biological role, during the asexual blood stage, participates in initial cleavage of native host hemoglobin (Hb) resulting in Hb denaturation. May cleave preferentially denatured hemoglobin that has been cleaved by PMI. Digestion of host Hb is an essential step which provides the parasite with amino acids for protein synthesis, and regulates osmolarity. The protein is Plasmepsin II of Plasmodium falciparum (isolate 3D7).